Reading from the N-terminus, the 299-residue chain is Acetylglutamate kinase (299 aa).

Substrate contacts are provided by residues 72 to 73 (GG), arginine 94, and asparagine 196.

Belongs to the acetylglutamate kinase family. ArgB subfamily.

It is found in the cytoplasm. It carries out the reaction N-acetyl-L-glutamate + ATP = N-acetyl-L-glutamyl 5-phosphate + ADP. The protein operates within amino-acid biosynthesis; L-arginine biosynthesis; N(2)-acetyl-L-ornithine from L-glutamate: step 2/4. In terms of biological role, catalyzes the ATP-dependent phosphorylation of N-acetyl-L-glutamate. This Burkholderia vietnamiensis (strain G4 / LMG 22486) (Burkholderia cepacia (strain R1808)) protein is Acetylglutamate kinase.